Reading from the N-terminus, the 88-residue chain is Small ribosomal subunit protein uS15 (88 aa).

It belongs to the universal ribosomal protein uS15 family. As to quaternary structure, part of the 30S ribosomal subunit. Forms a bridge to the 50S subunit in the 70S ribosome, contacting the 23S rRNA.

Functionally, one of the primary rRNA binding proteins, it binds directly to 16S rRNA where it helps nucleate assembly of the platform of the 30S subunit by binding and bridging several RNA helices of the 16S rRNA. In terms of biological role, forms an intersubunit bridge (bridge B4) with the 23S rRNA of the 50S subunit in the ribosome. This is Small ribosomal subunit protein uS15 from Francisella tularensis subsp. tularensis (strain FSC 198).